The primary structure comprises 948 residues: RNA polymerase-associated protein RapA (948 aa).

One can recognise a Helicase ATP-binding domain in the interval 164-332 (EVADRIAPRV…FARLRLLDPN (169 aa)). 177-184 (DEVGLGKT) provides a ligand contact to ATP. The DEAH box motif lies at 278-281 (DEAH). The Helicase C-terminal domain occupies 473 to 627 (RVDWLIDTLK…TCPTGNALQH (155 aa)).

It belongs to the SNF2/RAD54 helicase family. RapA subfamily. As to quaternary structure, interacts with the RNAP. Has a higher affinity for the core RNAP than for the holoenzyme. Its ATPase activity is stimulated by binding to RNAP.

Transcription regulator that activates transcription by stimulating RNA polymerase (RNAP) recycling in case of stress conditions such as supercoiled DNA or high salt concentrations. Probably acts by releasing the RNAP, when it is trapped or immobilized on tightly supercoiled DNA. Does not activate transcription on linear DNA. Probably not involved in DNA repair. This Pseudomonas syringae pv. syringae (strain B728a) protein is RNA polymerase-associated protein RapA.